The primary structure comprises 151 residues: Regulatory protein RecX (151 aa).

The protein belongs to the RecX family.

It is found in the cytoplasm. Its function is as follows. Modulates RecA activity. This chain is Regulatory protein RecX, found in Actinobacillus pleuropneumoniae serotype 5b (strain L20).